The sequence spans 93 residues: N-acetyl-S-hydroxy-L-cysteine reductase (93 aa).

Residues 1–93 form the Glutaredoxin domain; that stretch reads MSDVVNIVVW…NHAQIKEAKR (93 aa). A disulfide bridge connects residues cysteine 15 and cysteine 18.

It belongs to the glutaredoxin family.

It catalyses the reaction N-acetyl-S-hydroxy-L-cysteine + AH2 = N-acetyl-L-cysteine + A + H2O. The protein operates within amino-acid metabolism. Involved in a cysteine salvage pathway from S-alkylcysteine. Catalyzes the reduction of N-acetyl-S-hydroxy-L-cysteine (N-acetyl-L-cysteine sulfenic acid) to N-acetyl-L-cysteine. This pathway is likely important in the catabolism of alkylated cysteine generated by proteolysis of alkylated glutathione formed in the detoxification of a wide range of electrophiles. In Bacillus subtilis (strain 168), this protein is N-acetyl-S-hydroxy-L-cysteine reductase.